Consider the following 365-residue polypeptide: Sesquiterpene synthase 3 (365 aa).

The Mg(2+) site is built by aspartate 117, asparagine 253, serine 257, and glutamate 261. Residues 117 to 121 (DDWSD) carry the DDXXD motif motif. The NSE/DTE motif signature appears at 253–261 (NDILSYNRE). Arginine 341 and tyrosine 342 together coordinate (2E,6E)-farnesyl diphosphate.

It belongs to the terpene synthase family. Mg(2+) is required as a cofactor.

The enzyme catalyses (2E,6E)-farnesyl diphosphate = delta-cadinene + diphosphate. Terpene cyclase that catalyzes the cyclization of farnesyl diphosphate (FPP) to various sesquiterpenes, including beta-elemene gamma-cadinene, delta-cadinene, and alpha-cadinene. In Postia placenta (strain ATCC 44394 / Madison 698-R) (Brown rot fungus), this protein is Sesquiterpene synthase 3.